The following is a 207-amino-acid chain: Granulocyte colony-stimulating factor (207 aa).

The N-terminal stretch at 1–30 (MAGPATQSPMKLMALQLLLWHSALWTVQEA) is a signal peptide. Intrachain disulfides connect Cys69–Cys75 and Cys97–Cys107. O-linked (GalNAc...) threonine glycosylation occurs at Thr166.

It belongs to the IL-6 superfamily. Monomer. Post-translationally, O-glycan consists of Gal-GalNAc disaccharide which can be modified with up to two sialic acid residues (done in recombinantly expressed G-CSF from CHO cells).

Its subcellular location is the secreted. Functionally, granulocyte/macrophage colony-stimulating factors are cytokines that act in hematopoiesis by controlling the production, differentiation, and function of 2 related white cell populations of the blood, the granulocytes and the monocytes-macrophages. This CSF induces granulocytes. The protein is Granulocyte colony-stimulating factor (CSF3) of Homo sapiens (Human).